Here is a 445-residue protein sequence, read N- to C-terminus: Phosphoglucosamine mutase (445 aa).

Residue Ser99 is the Phosphoserine intermediate of the active site. Mg(2+)-binding residues include Ser99, Asp242, Asp244, and Asp246. Ser99 is modified (phosphoserine).

This sequence belongs to the phosphohexose mutase family. It depends on Mg(2+) as a cofactor. Post-translationally, activated by phosphorylation.

It catalyses the reaction alpha-D-glucosamine 1-phosphate = D-glucosamine 6-phosphate. Catalyzes the conversion of glucosamine-6-phosphate to glucosamine-1-phosphate. The chain is Phosphoglucosamine mutase from Campylobacter jejuni subsp. jejuni serotype O:6 (strain 81116 / NCTC 11828).